Here is a 96-residue protein sequence, read N- to C-terminus: Protein Vpr (96 aa).

Residues 1–42 form a homooligomerization region; it reads MEQAPEDQGPQREPYNQWALELLEELKNEAVRHFPRIWLHGL. 3 positions are modified to phosphoserine; by host: S79, S94, and S96.

The protein belongs to the HIV-1 VPR protein family. Homooligomer, may form homodimer. Interacts with p6-gag region of the Pr55 Gag precursor protein through a (Leu-X-X)4 motif near the C-terminus of the P6gag protein. Interacts with host UNG. May interact with host RAD23A/HHR23A. Interacts with host VPRBP/DCAF1, leading to hijack the CUL4A-RBX1-DDB1-DCAF1/VPRBP complex, mediating ubiquitination of host proteins such as TERT and ZGPAT and arrest of the cell cycle in G2 phase. Phosphorylated on several residues by host. These phosphorylations regulate VPR activity for the nuclear import of the HIV-1 pre-integration complex.

The protein resides in the virion. Its subcellular location is the host nucleus. The protein localises to the host extracellular space. During virus replication, may deplete host UNG protein, and incude G2-M cell cycle arrest. Acts by targeting specific host proteins for degradation by the 26S proteasome, through association with the cellular CUL4A-DDB1 E3 ligase complex by direct interaction with host VPRPB/DCAF-1. Cell cycle arrest reportedly occurs within hours of infection and is not blocked by antiviral agents, suggesting that it is initiated by the VPR carried into the virion. Additionally, VPR induces apoptosis in a cell cycle dependent manner suggesting that these two effects are mechanistically linked. Detected in the serum and cerebrospinal fluid of AIDS patient, VPR may also induce cell death to bystander cells. Functionally, during virus entry, plays a role in the transport of the viral pre-integration (PIC) complex to the host nucleus. This function is crucial for viral infection of non-dividing macrophages. May act directly at the nuclear pore complex, by binding nucleoporins phenylalanine-glycine (FG)-repeat regions. This is Protein Vpr from Human immunodeficiency virus type 1 group M subtype B (isolate MN) (HIV-1).